Here is a 115-residue protein sequence, read N- to C-terminus: Virulence-associated protein A' (115 aa).

Positions 16 to 70 (IKSDLDGLGINITEAAKALDVTRAALSEIINGKRGISAKMAWKLSKAFTNSDPEF) constitute an HTH cro/C1-type domain. Positions 27–46 (ITEAAKALDVTRAALSEIIN) form a DNA-binding region, H-T-H motif.

This sequence belongs to the VapA/VapI family.

This Dichelobacter nodosus (Bacteroides nodosus) protein is Virulence-associated protein A' (vapA').